The sequence spans 407 residues: Imidazolonepropionase (407 aa).

Fe(3+) is bound by residues H74 and H76. Residues H74 and H76 each coordinate Zn(2+). 4-imidazolone-5-propanoate contacts are provided by R83, Y146, and H179. Y146 lines the N-formimidoyl-L-glutamate pocket. Fe(3+) is bound at residue H244. Zn(2+) is bound at residue H244. Q247 lines the 4-imidazolone-5-propanoate pocket. D319 provides a ligand contact to Fe(3+). Residue D319 coordinates Zn(2+). Residues N321 and G323 each contribute to the N-formimidoyl-L-glutamate site. T324 is a 4-imidazolone-5-propanoate binding site.

It belongs to the metallo-dependent hydrolases superfamily. HutI family. Requires Zn(2+) as cofactor. Fe(3+) is required as a cofactor.

Its subcellular location is the cytoplasm. It catalyses the reaction 4-imidazolone-5-propanoate + H2O = N-formimidoyl-L-glutamate. It functions in the pathway amino-acid degradation; L-histidine degradation into L-glutamate; N-formimidoyl-L-glutamate from L-histidine: step 3/3. In terms of biological role, catalyzes the hydrolytic cleavage of the carbon-nitrogen bond in imidazolone-5-propanoate to yield N-formimidoyl-L-glutamate. It is the third step in the universal histidine degradation pathway. The sequence is that of Imidazolonepropionase from Salmonella typhi.